A 226-amino-acid chain; its full sequence is ATP-dependent dethiobiotin synthetase BioD (226 aa).

12-17 contacts ATP; sequence GVGKTV. Residue T16 participates in Mg(2+) binding. K37 is a catalytic residue. T41 is a binding site for substrate. ATP contacts are provided by residues D49, 108-111, and 169-170; these read EGAG and GS. Residues D49 and E108 each contribute to the Mg(2+) site.

This sequence belongs to the dethiobiotin synthetase family. In terms of assembly, homodimer. The cofactor is Mg(2+).

It is found in the cytoplasm. It carries out the reaction (7R,8S)-7,8-diammoniononanoate + CO2 + ATP = (4R,5S)-dethiobiotin + ADP + phosphate + 3 H(+). It functions in the pathway cofactor biosynthesis; biotin biosynthesis; biotin from 7,8-diaminononanoate: step 1/2. Its function is as follows. Catalyzes a mechanistically unusual reaction, the ATP-dependent insertion of CO2 between the N7 and N8 nitrogen atoms of 7,8-diaminopelargonic acid (DAPA, also called 7,8-diammoniononanoate) to form a ureido ring. In Mycobacterium marinum (strain ATCC BAA-535 / M), this protein is ATP-dependent dethiobiotin synthetase BioD.